Reading from the N-terminus, the 92-residue chain is Small ribosomal subunit protein uS19 (92 aa).

The protein belongs to the universal ribosomal protein uS19 family.

Its function is as follows. Protein S19 forms a complex with S13 that binds strongly to the 16S ribosomal RNA. This Polynucleobacter asymbioticus (strain DSM 18221 / CIP 109841 / QLW-P1DMWA-1) (Polynucleobacter necessarius subsp. asymbioticus) protein is Small ribosomal subunit protein uS19.